Reading from the N-terminus, the 381-residue chain is GDP-mannose-dependent monoacylated alpha-(1-6)-phosphatidylinositol monomannoside mannosyltransferase (381 aa).

GDP-alpha-D-mannose-binding residues include Arg-206, Lys-211, Leu-261, and Glu-298.

This sequence belongs to the glycosyltransferase group 1 family. Glycosyltransferase 4 subfamily.

It carries out the reaction a 1,2-diacyl-sn-glycero-3-phospho-[alpha-D-mannopyranosyl-(1&lt;-&gt;6)-D-myo-inositol] + GDP-alpha-D-mannose = a 2,6-O-bis(alpha-D-mannopyranosyl)-1-phosphatidyl-1D-myo-inositol + GDP + H(+). The enzyme catalyses a 1,2-diacyl-sn-glycero-3-phospho-[alpha-D-6-acyl-mannopyranosyl-(1&lt;-&gt;6)-D-myo-inositol] + GDP-alpha-D-mannose = a 2-O-(alpha-D-mannosyl)-6-O-(6-O-acyl-alpha-D-mannosyl)-1-phosphatidyl-1D-myo-inositol + GDP + H(+). The protein operates within phospholipid metabolism; phosphatidylinositol metabolism. Functionally, involved in the biosynthesis of phosphatidyl-myo-inositol mannosides (PIM) which are early precursors in the biosynthesis of lipomannans (LM) and lipoarabinomannans (LAM). Catalyzes the addition of a mannosyl residue from GDP-D-mannose (GDP-Man) to the position 6 of a phosphatidyl-myo-inositol bearing an alpha-1,2-linked mannose residue (PIM1) to generate phosphatidyl-myo-inositol bearing alpha-1,2- and alpha-1,6-linked mannose residues (Ac1PIM2). PimB also catalyzes the addition of a mannosyl residue from GDP-Man to the position 6 of phosphatidyl-myo-inositol bearing an acylated alpha-1,2-linked mannose residue (Ac1PIM1) to generate monoacylated phosphatidyl-myo-inositol bearing alpha-1,2- and alpha-1,6-linked mannose residues (Ac1PIM2). The addition of the second mannosyl residue by PimB preferentially occurs before the acylation of the mannosyl residue transferred by PimA. Also able to transfer a mannosyl residue from GDP-Man to the position 6 of a phosphatidyl-myo-inositol (PI), but this reaction is very slow. The chain is GDP-mannose-dependent monoacylated alpha-(1-6)-phosphatidylinositol monomannoside mannosyltransferase from Corynebacterium glutamicum (strain ATCC 13032 / DSM 20300 / JCM 1318 / BCRC 11384 / CCUG 27702 / LMG 3730 / NBRC 12168 / NCIMB 10025 / NRRL B-2784 / 534).